The following is a 301-amino-acid chain: Homoserine O-acetyltransferase (301 aa).

Residue Cys142 is the Acyl-thioester intermediate of the active site. Substrate is bound by residues Lys163 and Ser192. His235 functions as the Proton acceptor in the catalytic mechanism. Residue Glu237 is part of the active site. Arg249 contacts substrate.

The protein belongs to the MetA family.

It is found in the cytoplasm. It carries out the reaction L-homoserine + acetyl-CoA = O-acetyl-L-homoserine + CoA. The protein operates within amino-acid biosynthesis; L-methionine biosynthesis via de novo pathway; O-acetyl-L-homoserine from L-homoserine: step 1/1. In terms of biological role, transfers an acetyl group from acetyl-CoA to L-homoserine, forming acetyl-L-homoserine. In Bacillus cereus (strain ZK / E33L), this protein is Homoserine O-acetyltransferase.